Reading from the N-terminus, the 393-residue chain is Sialyltransferase-like protein 1 (393 aa).

The Cytoplasmic portion of the chain corresponds to 1–8 (MKRPLRRP). A helical; Signal-anchor for type II membrane protein transmembrane segment spans residues 9–27 (FAVLLFVVLCAAASFPSVL). Residues 28–393 (RRSVGPAPVL…IAVPPVVFYH (366 aa)) are Lumenal-facing. Residues Asn49, Asn212, and Asn258 are each glycosylated (N-linked (GlcNAc...) asparagine).

This sequence belongs to the glycosyltransferase 29 family. Expressed in leaves and stalks. Expressed at low levels in roots.

It localises to the golgi apparatus membrane. Possesses sialyltransferase-like activity in vitro. Transfers sialic acid to the oligosaccharide Gal-beta-1,3-GalNAc and to glycoproteins such as asialofetuin, alpha-1-acid glycoprotein (NeuAc-alpha-2,3-Gal-beta-1,3-GalNAc-) and andasialo-alpha-1-acid glycoprotein. The transferred sialic acid is linked to galactose of Gal-beta-1,3-GalNAc through alpha-2,6-linkage. In Oryza sativa subsp. japonica (Rice), this protein is Sialyltransferase-like protein 1.